Here is a 620-residue protein sequence, read N- to C-terminus: Chaperone protein HscA homolog (620 aa).

Belongs to the heat shock protein 70 family.

In terms of biological role, chaperone involved in the maturation of iron-sulfur cluster-containing proteins. Has a low intrinsic ATPase activity which is markedly stimulated by HscB. The sequence is that of Chaperone protein HscA homolog from Acinetobacter baumannii (strain SDF).